A 204-amino-acid chain; its full sequence is Dephospho-CoA kinase (204 aa).

Positions 5–204 constitute a DPCK domain; the sequence is VVGLTGGIGS…YLANLVKAML (200 aa). 13–18 is an ATP binding site; the sequence is GSGKSA.

The protein belongs to the CoaE family.

It localises to the cytoplasm. It carries out the reaction 3'-dephospho-CoA + ATP = ADP + CoA + H(+). The protein operates within cofactor biosynthesis; coenzyme A biosynthesis; CoA from (R)-pantothenate: step 5/5. In terms of biological role, catalyzes the phosphorylation of the 3'-hydroxyl group of dephosphocoenzyme A to form coenzyme A. This chain is Dephospho-CoA kinase, found in Chromobacterium violaceum (strain ATCC 12472 / DSM 30191 / JCM 1249 / CCUG 213 / NBRC 12614 / NCIMB 9131 / NCTC 9757 / MK).